Here is a 322-residue protein sequence, read N- to C-terminus: Fructose-1,6-bisphosphatase class 1 (322 aa).

Positions 84, 103, 105, and 106 each coordinate Mg(2+). Substrate contacts are provided by residues 106 to 109 (DGSS), Asn-198, and Lys-264. Glu-270 provides a ligand contact to Mg(2+).

The protein belongs to the FBPase class 1 family. Homotetramer. It depends on Mg(2+) as a cofactor.

It is found in the cytoplasm. It catalyses the reaction beta-D-fructose 1,6-bisphosphate + H2O = beta-D-fructose 6-phosphate + phosphate. Its pathway is carbohydrate biosynthesis; gluconeogenesis. The protein is Fructose-1,6-bisphosphatase class 1 of Colwellia psychrerythraea (strain 34H / ATCC BAA-681) (Vibrio psychroerythus).